The sequence spans 676 residues: RNA helicase NPH-II (676 aa).

The Helicase ATP-binding domain occupies 172-347 (FSAWISHRPV…VFLPNPAFIH (176 aa)). 185 to 192 (GGTGVGKT) lines the ATP pocket. Positions 296-299 (DEVH) match the DEXH box motif. The Helicase C-terminal domain occupies 366–535 (NPSSRMAYIE…NYILYANKFN (170 aa)).

This sequence belongs to the DEAD box helicase family. DEAH subfamily. Monomer.

It is found in the virion. The enzyme catalyses ATP + H2O = ADP + phosphate + H(+). NTP-dependent helicase that catalyzes unidirectional unwinding of 3'tailed duplex RNAs and plays an important role during transcription of early mRNAs, presumably by preventing R-loop formation behind the elongating RNA polymerase. Might also play a role in the export of newly synthesized mRNA chains out of the core into the cytoplasm. Required for replication and propagation of viral particles. This is RNA helicase NPH-II (OPG084) from Homo sapiens (Human).